A 151-amino-acid chain; its full sequence is Small ribosomal subunit protein uS15 (151 aa).

This sequence belongs to the universal ribosomal protein uS15 family.

The chain is Small ribosomal subunit protein uS15 (RpS13) from Choristoneura parallela (Spotted fireworm moth).